A 280-amino-acid polypeptide reads, in one-letter code: MLLWPAPAKLNLFLHIIGRREDGYHLLQTAFQFVDYCDWLEFRPSADGRIEHLSPLPGVPVEHDLVYRAALLLQQRTACSQGVEVRIRKHLPMGGGLGGGSSDAATTLVALNHLWETGLSISQLAQLGLELGADVPVFIYGRAAWAEGVGEQLQPLELPEPWYLIVTPAVQVSTREVFIAPELTRDCKPMTISGLLAGEGENVCEPVVRGLYPVVADALDWLSQFSPARMTGTGSSIFAAFDGKSQALAALACMPSHWQGIVAKGCNYSLLLDCLEKTGC.

Lys-9 is a catalytic residue. Pro-92–Ser-102 contacts ATP. Asp-134 is an active-site residue.

This sequence belongs to the GHMP kinase family. IspE subfamily.

The catalysed reaction is 4-CDP-2-C-methyl-D-erythritol + ATP = 4-CDP-2-C-methyl-D-erythritol 2-phosphate + ADP + H(+). The protein operates within isoprenoid biosynthesis; isopentenyl diphosphate biosynthesis via DXP pathway; isopentenyl diphosphate from 1-deoxy-D-xylulose 5-phosphate: step 3/6. In terms of biological role, catalyzes the phosphorylation of the position 2 hydroxy group of 4-diphosphocytidyl-2C-methyl-D-erythritol. This chain is 4-diphosphocytidyl-2-C-methyl-D-erythritol kinase, found in Nitrosococcus oceani (strain ATCC 19707 / BCRC 17464 / JCM 30415 / NCIMB 11848 / C-107).